The sequence spans 525 residues: GMP synthase [glutamine-hydrolyzing] (525 aa).

The region spanning 8 to 206 (PLLILDFGSQ…VVDICKASTD (199 aa)) is the Glutamine amidotransferase type-1 domain. Cys85 functions as the Nucleophile in the catalytic mechanism. Residues His180 and Glu182 contribute to the active site. The 194-residue stretch at 207–400 (WTPEHIIDEA…LGLPHDMVYR (194 aa)) folds into the GMPS ATP-PPase domain. Residue 234–240 (SGGVDSS) coordinates ATP.

In terms of assembly, homodimer.

It catalyses the reaction XMP + L-glutamine + ATP + H2O = GMP + L-glutamate + AMP + diphosphate + 2 H(+). Its pathway is purine metabolism; GMP biosynthesis; GMP from XMP (L-Gln route): step 1/1. Catalyzes the synthesis of GMP from XMP. This Legionella pneumophila (strain Lens) protein is GMP synthase [glutamine-hydrolyzing].